Consider the following 730-residue polypeptide: MRAALVAVAALLWVALHAAAWVNDVSPKMYVQFGEERVQRFLGNESHKDHFKLLEKDHNSLLVGARNIVYNISLRDLTEFTEQRIEWHSSGAHRELCYLKGKSEDDCQNYIRVLAKIDDDRVLICGTNAYKPLCRHYALKDGDYVVEKEYEGRGLCPFDPDHNSTAIYSEGQLYSATVADFSGTDPLIYRGPLRTERSDLKQLNAPNFVNTMEYNDFIFFFFRETAVEYINCGKAIYSRVARVCKHDKGGPHQFGDRWTSFLKSRLNCSVPGDYPFYFNEIQSTSDIIEGNYGGQVEKLIYGVFTTPVNSIGGSAVCAFSMKSILESFDGPFKEQETMNSNWLAVPSLKVPEPRPGQCVNDSRTLPDVSVNFVKSHTLMDEAVPAFFTRPILIRISLQYRFTKIAVDQQVRTPDGKAYDVLFIGTDDGKVIKALNSASFDSSDTVDSVVIEELQVLPPGVPVKNLYVVRMDGDDSKLVVVSDDEILAIKLHRCGSDKITNCRECVSLQDPYCAWDNVELKCTAVGSPDWSAGKRRFIQNISLGEHKACGGRPQTEIVASPVPTQPTTKSSGDPVHSIHQAEFEPEIDNEIVIGVDDSNVIPNTLAEINHAGSKLPSSQEKLPIYTAETLTIAIVTSCLGALVVGFISGFLFSRRCRGEDYTDMPFPDQRHQLNRLTEAGLNADSPYLPPCANNKAAINLVLNVPPKNANGKNANSSAENKPIQKVKKTYI.

The first 20 residues, 1-20 (MRAALVAVAALLWVALHAAA), serve as a signal peptide directing secretion. Topologically, residues 21-630 (WVNDVSPKMY…LPIYTAETLT (610 aa)) are extracellular. One can recognise a Sema domain in the interval 28 to 490 (KMYVQFGEER…SDDEILAIKL (463 aa)). Asparagine 44 and asparagine 71 each carry an N-linked (GlcNAc...) asparagine glycan. Cystine bridges form between cysteine 97/cysteine 107 and cysteine 125/cysteine 134. Residues asparagine 163 and asparagine 267 are each glycosylated (N-linked (GlcNAc...) asparagine). Cystine bridges form between cysteine 244-cysteine 358 and cysteine 268-cysteine 317. The N-linked (GlcNAc...) asparagine glycan is linked to asparagine 360. 2 disulfides stabilise this stretch: cysteine 493/cysteine 512 and cysteine 504/cysteine 521. Residue asparagine 539 is glycosylated (N-linked (GlcNAc...) asparagine). The chain crosses the membrane as a helical span at residues 631–651 (IAIVTSCLGALVVGFISGFLF). Residues 652–730 (SRRCRGEDYT…PIQKVKKTYI (79 aa)) lie on the Cytoplasmic side of the membrane. Over residues 708 to 720 (ANGKNANSSAENK) the composition is skewed to low complexity. Residues 708–730 (ANGKNANSSAENKPIQKVKKTYI) are disordered.

Belongs to the semaphorin family. Dynamically expressed on a subset of axon pathways in the developing CNS and on circumferential bands of epithelial cells in developing limb buds.

Its subcellular location is the membrane. Its function is as follows. Plays a role in growth cones guidance. The chain is Semaphorin-1A (SEMA-1A) from Schistocerca americana (American grasshopper).